Reading from the N-terminus, the 780-residue chain is Zinc finger protein GLIS3 (780 aa).

2 stretches are compositionally biased toward polar residues: residues Pro80–Thr92 and Val106–Leu115. Disordered regions lie at residues Pro80–Ala148 and Pro290–His315. Residues Ser135–Ala148 show a composition bias toward basic residues. Residues Leu293–His308 show a composition bias toward pro residues. The C2H2-type 1 zinc finger occupies His345–His370. The C2H2-type 2; atypical zinc-finger motif lies at Phe379 to His406. C2H2-type zinc fingers lie at residues Asn412–His436, Tyr442–His466, and Tyr472–His496. Disordered stretches follow at residues Asp485–Glu512 and Leu527–Gly670. A Bipartite nuclear localization signal motif is present at residues Arg490–Lys506. The segment covering Ser497 to Glu512 has biased composition (basic and acidic residues). Low complexity predominate over residues His567–Ala577. The segment covering Val593–Pro605 has biased composition (polar residues).

It belongs to the GLI C2H2-type zinc-finger protein family. In terms of tissue distribution, in the embryo, expressed at high levels in the kidney and testis. In the adult, expressed at high levels in the kidney and uterus and at lower levels in the brain, lung, skeletal muscle and pancreas.

It localises to the nucleus. Acts both as a repressor and activator of transcription. Binds to the consensus sequence 5'-GACCACCCAC-3'. The sequence is that of Zinc finger protein GLIS3 from Mus musculus (Mouse).